An 857-amino-acid chain; its full sequence is Leucine--tRNA ligase (857 aa).

The 'HIGH' region signature appears at 42–52 (PYPSGRLHMGH). Residues 617–621 (KMSKS) carry the 'KMSKS' region motif. ATP is bound at residue Lys-620.

It belongs to the class-I aminoacyl-tRNA synthetase family.

The protein resides in the cytoplasm. The enzyme catalyses tRNA(Leu) + L-leucine + ATP = L-leucyl-tRNA(Leu) + AMP + diphosphate. This Vibrio parahaemolyticus serotype O3:K6 (strain RIMD 2210633) protein is Leucine--tRNA ligase.